The sequence spans 182 residues: CKLF-like MARVEL transmembrane domain-containing protein 3 (182 aa).

A compositionally biased stretch (acidic residues) spans 1–12 (MWPPDPDPDPDP). Residues 1–21 (MWPPDPDPDPDPEPAGGSRPG) form a disordered region. The MARVEL domain occupies 36-155 (FLCSLKGRLL…DFYLIFNDVA (120 aa)). 3 helical membrane passes run 64–84 (ASAFLTAPLLEFLLALYFLFA), 101–121 (MDFLRCVTAALIYFAISITAI), and 131–151 (AAGVFGFFATIVFATDFYLIF).

The protein belongs to the chemokine-like factor family. In terms of tissue distribution, expressed in the leukocytes, placenta and testis.

It localises to the membrane. This chain is CKLF-like MARVEL transmembrane domain-containing protein 3 (CMTM3), found in Homo sapiens (Human).